The chain runs to 252 residues: 3-deoxy-manno-octulosonate cytidylyltransferase (252 aa).

This sequence belongs to the KdsB family.

The protein localises to the cytoplasm. It carries out the reaction 3-deoxy-alpha-D-manno-oct-2-ulosonate + CTP = CMP-3-deoxy-beta-D-manno-octulosonate + diphosphate. It participates in nucleotide-sugar biosynthesis; CMP-3-deoxy-D-manno-octulosonate biosynthesis; CMP-3-deoxy-D-manno-octulosonate from 3-deoxy-D-manno-octulosonate and CTP: step 1/1. The protein operates within bacterial outer membrane biogenesis; lipopolysaccharide biosynthesis. Activates KDO (a required 8-carbon sugar) for incorporation into bacterial lipopolysaccharide in Gram-negative bacteria. This Trichlorobacter lovleyi (strain ATCC BAA-1151 / DSM 17278 / SZ) (Geobacter lovleyi) protein is 3-deoxy-manno-octulosonate cytidylyltransferase.